The primary structure comprises 741 residues: MDIINCSDNDLDLIGKSLALSHDEMLLIKKYFTEIKRNPSDVELQAIAQSWSEHSCYKSSKFYLKKYLSNLRNERTILAMEDDAGVVKFNDDYVYVVKMESHNHPSAVEPYGGAATGVGGIIRDVLCMGAQPVALVDSLYFGDPDNKSGFLSERFIINGVVSGIRDYGNRLGIPNVAGSIYFHEGYNTSPIVNAGCIGISRKDKIVRSRVQKARDILILCGGRTGRDGIHGVNFASRVLDLKNGENRNAVQLGNPIVEEPLIHAILELNDLGLITGMKDLGGGGLSSAVTEMLYAGNLGGTINLDSVLLKDDNMLPWEIWISESQERMLISSDERNLPQIKDVLDKWNIEFSVIGRAEEKKNLEIYYKNEKVFDLPLEFISKTPVYQRPYKKPRNRCKSEPFRDDDINKSIISLISSINVCSRAPVIRQYDHTVRGATIVRPLTGLPNNETHSDAAVIKPVDDSFAGIAVTSGSKPMLCTIDPYGGALESLIEAYKNIIVTGAEPDAIVDSLNFGNPENEETMYSFVETLKAIRDFTLKFKLQLVSGNVSFYNKNVSDIMPTPNIMMTGIIDDVRKAITTEFKNKNSLIYLIGSINGSLAGTVYSKLKDIKCYDYHNSNINDLCNVYNIIKENKEKILAAHDVSDGGIIAALIEMSFGKNIGFNVNLKDIKMNLENKLFSEHGTAIVIEVPLESEIVFNNLGIKLGYTCDDITVMDGENMVFNARISELKNLWDSGLGKYL.

His-54 is an active-site residue. ATP contacts are provided by Tyr-57 and Lys-98. Residue Glu-100 coordinates Mg(2+). Substrate contacts are provided by residues 101 to 104 (SHNH) and Arg-123. Residue His-102 is the Proton acceptor of the active site. Residue Asp-124 participates in Mg(2+) binding. Residue Gln-251 participates in substrate binding. Residue Asp-279 participates in Mg(2+) binding. 323–325 (ESQ) provides a ligand contact to substrate. ATP-binding residues include Asp-510 and Gly-547. Asn-548 lines the Mg(2+) pocket. Residue Ser-550 participates in substrate binding.

It belongs to the FGAMS family. Monomer. Part of the FGAM synthase complex composed of 1 PurL, 1 PurQ and 2 PurS subunits.

The protein resides in the cytoplasm. It catalyses the reaction N(2)-formyl-N(1)-(5-phospho-beta-D-ribosyl)glycinamide + L-glutamine + ATP + H2O = 2-formamido-N(1)-(5-O-phospho-beta-D-ribosyl)acetamidine + L-glutamate + ADP + phosphate + H(+). The protein operates within purine metabolism; IMP biosynthesis via de novo pathway; 5-amino-1-(5-phospho-D-ribosyl)imidazole from N(2)-formyl-N(1)-(5-phospho-D-ribosyl)glycinamide: step 1/2. Part of the phosphoribosylformylglycinamidine synthase complex involved in the purines biosynthetic pathway. Catalyzes the ATP-dependent conversion of formylglycinamide ribonucleotide (FGAR) and glutamine to yield formylglycinamidine ribonucleotide (FGAM) and glutamate. The FGAM synthase complex is composed of three subunits. PurQ produces an ammonia molecule by converting glutamine to glutamate. PurL transfers the ammonia molecule to FGAR to form FGAM in an ATP-dependent manner. PurS interacts with PurQ and PurL and is thought to assist in the transfer of the ammonia molecule from PurQ to PurL. The chain is Phosphoribosylformylglycinamidine synthase subunit PurL from Picrophilus torridus (strain ATCC 700027 / DSM 9790 / JCM 10055 / NBRC 100828 / KAW 2/3).